Reading from the N-terminus, the 655-residue chain is Putative calcium up-regulated protein J (655 aa).

In terms of domain architecture, Ricin B-type lectin spans lysine 40–glutamate 181.

Belongs to the cup family.

In Dictyostelium discoideum (Social amoeba), this protein is Putative calcium up-regulated protein J (cupJ).